The chain runs to 1170 residues: MNELNTVSTNSSDSTKDGGTSNSPDDMDSAAAASHAIKKRTKASRACDQCRKKKIKCDYKDEKGVCSNCQRNGDRCSFDRVPLKRGPSKGYTRSTSHPRTNEIQDHNNSRSYNTFDNSNNTLNNNTGNSGDNGINSNTVPSTPSRSNSVLLPPLTQYIPQAGGIPPSFQNPAIQSTMPAGNIGQQQFWKVPYHEFQHQRKGSIDSLQSDISVRTLNPNEQLSYNTVQQSPITNKHTNDSGNANGSVTGSGSASGSGGYWSFIRTSGLLAPTDDHNGEQTRRSSSIPSLLRNTSNSLLLGGQPQLPPPQQQSQPQAHQQKLQQGQNLYSYSQFSQQQPYNPSISSFGQFAANGFHSRQGSVASEAMSPSAPAMFTSTSTNPVNVAQQTQRPQGQQVPQFSSELDGNKRRQSAPVSVTLSTDRLNGNENNNGEINNNNGSNNSGSSKDTSQHSQESVTTPVALEASSPGSTPQRSTKKRRKSYVSKKTKPKRDSSISITSKDSAHPMTTSSTIAYGQISDVDLIDTYYEFIHVGFPIIPLNKTTLTSDLLLVNTQPISNIHEVNSYVILWFRNSLELLVRVALKQKPGGKFFDNIVGVALSPSNDNNKAGFTTATARDDAEKTRRDSHNEVQDTLEVQSVFIAALNECFQKIVDIHPKFRENNDQISPKIKVIYLSTFILLNYILAFVGYDNSFVLGMSVTIFNEFKLYKLLLFPEPDINDVKPPVDEEVSTGNGNTKTSEFEIGSESAGHMNPSNSPNSMDENISHYSVLFKRLYVLLSVFDSLQSCAFGGPKLLNISIQGSTERFFSNDLGSKWCLEQSQLRLKSVLQSLKLGELMSELTRNRISMNGNRKPGFDITNSSSLLSEYVETQPLSVAQLFCKLLIGKHNFINCLLSLYDSEAGVYSDLTLDLSSKIADSLCSLISIILQVLTLILRLNPTNSIDFNYRPPNPPANNPTVQEGPSAMGSSPVAGNLSAAPPSEGNPDFYKKLLGLKQDTGTILSDLCRGIISPFAIAILHEVYNITELVKQMPTSLISIMMTATTTQNTQDTKKSQDLVMKLSNSMNEVVQITSVLTMIKPFKIFEHELNKPIMSLTGGLSSTTRNDVMWPKSGQGLRESSVMKTLLDERRTSGTQPTTAPVAAEEPRLENVALENFVSIGWKLLDDSELGWY.

A compositionally biased stretch (polar residues) spans 1–22 (MNELNTVSTNSSDSTKDGGTSN). Disordered stretches follow at residues 1–47 (MNEL…SRAC) and 77–149 (SFDR…SNSV). Positions 47 to 76 (CDQCRKKKIKCDYKDEKGVCSNCQRNGDRC) form a DNA-binding region, zn(2)-C6 fungal-type. Positions 99–108 (RTNEIQDHNN) are enriched in basic and acidic residues. Low complexity predominate over residues 113–138 (NTFDNSNNTLNNNTGNSGDNGINSNT). The segment covering 139 to 149 (VPSTPSRSNSV) has biased composition (polar residues). Serine 202, serine 205, serine 208, and serine 229 each carry phosphoserine. 5 disordered regions span residues 226 to 254 (VQQSPITNKHTNDSGNANGSVTGSGSASG), 269 to 288 (APTDDHNGEQTRRSSSIPSL), 293 to 323 (SNSLLLGGQPQLPPPQQQSQPQAHQQKLQQG), 384 to 506 (AQQT…HPMT), and 944 to 977 (NYRPPNPPANNPTVQEGPSAMGSSPVAGNLSAAP). Over residues 239-250 (SGNANGSVTGSG) the composition is skewed to low complexity. Basic and acidic residues predominate over residues 271-280 (TDDHNGEQTR). Phosphoserine occurs at positions 283 and 284. 3 stretches are compositionally biased toward low complexity: residues 293–302 (SNSLLLGGQP), 309–323 (QQSQPQAHQQKLQQG), and 385–397 (QQTQRPQGQQVPQ). Residues serine 410 and serine 414 each carry the phosphoserine modification. The span at 411-422 (APVSVTLSTDRL) shows a compositional bias: polar residues. Residues 424-444 (GNENNNGEINNNNGSNNSGSS) are compositionally biased toward low complexity. Positions 445–457 (KDTSQHSQESVTT) are enriched in polar residues. The segment covering 473–488 (STKKRRKSYVSKKTKP) has biased composition (basic residues). Residues 493 to 506 (SISITSKDSAHPMT) are compositionally biased toward polar residues. At serine 1130 the chain carries Phosphoserine.

The protein belongs to the EDS1/RGT1 family. In terms of processing, glucose-induced phosphorylation regulates the DNA-binding activity. Hyperphosphorylation in cells growing on high levels of glucose does prevents DNA-binding and dephosphorylation restores DNA-binding ability.

It is found in the nucleus. The protein localises to the cytoplasm. Its function is as follows. Glucose-responsive transcription factor that regulates expression of several glucose transporter (HXT) genes in response to glucose. In the absence of glucose, it functions as a transcriptional repressor, whereas high concentrations of glucose cause it to function as a transcriptional activator. In cells growing on low levels of glucose, has a neutral role, neither repressing nor activating transcription. Binds the consensus binding site sequence 5'-CGGANNA-3', of which multiple copies are present in all HXT promoters regulated by RGT1. This Saccharomyces cerevisiae (strain JAY291) (Baker's yeast) protein is Glucose transport transcription regulator RGT1 (RGT1).